The chain runs to 194 residues: E3 ubiquitin-protein ligase RNF4 (194 aa).

Residues Met-1 to Gly-12 are compositionally biased toward basic residues. The tract at residues Met-1 to Thr-20 is required for ubiquitination activity. Positions Met-1 to Glu-36 are disordered. The mediates interaction with TRPS1 stretch occupies residues Pro-6 to Leu-65. 4 consecutive short sequence motifs (SUMO interaction motif) follow at residues Ile-40–Val-43, Ile-50–Leu-53, Val-61–Val-63, and Val-71–Val-74. Phosphoserine is present on residues Ser-98 and Ser-99. Residues Cys-136, Cys-139, Cys-158, His-160, Cys-163, Cys-166, Cys-177, and Cys-180 each coordinate Zn(2+). The RING-type zinc finger occupies Cys-136 to Arg-181.

As to quaternary structure, homodimer (via RING-type zinc finger domain). Interacts with GSC2. Interacts with AR/the androgen receptor and TBP. Interacts with TCF20. Interacts with PATZ1. Interacts with TRPS1; negatively regulates TRPS1 transcriptional repressor activity. Interacts with PML (isoform PML-1, isoform PML-2, isoform PML-3, isoform PML-4, isoform PML-5 and isoform PML-6). Interacts with PRDM1/Blimp-1. Post-translationally, sumoylated; conjugated by one or two SUMO1 moieties. Autoubiquitinated. Widely expressed with highest levels in testis.

Its subcellular location is the cytoplasm. The protein localises to the nucleus. It localises to the nucleoplasm. It is found in the PML body. It catalyses the reaction S-ubiquitinyl-[E2 ubiquitin-conjugating enzyme]-L-cysteine + [acceptor protein]-L-lysine = [E2 ubiquitin-conjugating enzyme]-L-cysteine + N(6)-ubiquitinyl-[acceptor protein]-L-lysine.. It functions in the pathway protein modification; protein ubiquitination. E3 ubiquitin-protein ligase which binds polysumoylated chains covalently attached to proteins and mediates 'Lys-6'-, 'Lys-11'-, 'Lys-48'- and 'Lys-63'-linked polyubiquitination of those substrates and their subsequent targeting to the proteasome for degradation. Regulates the degradation of several proteins including PML and the transcriptional activator PEA3. Involved in chromosome alignment and spindle assembly, it regulates the kinetochore CENPH-CENPI-CENPK complex by targeting polysumoylated CENPI to proteasomal degradation. Regulates the cellular responses to hypoxia and heat shock through degradation of respectively EPAS1 and PARP1. Alternatively, it may also bind DNA/nucleosomes and have a more direct role in the regulation of transcription for instance enhancing basal transcription and steroid receptor-mediated transcriptional activation. Catalyzes ubiquitination of sumoylated PARP1 in response to PARP1 trapping to chromatin, leading to PARP1 removal from chromatin by VCP/p97. The chain is E3 ubiquitin-protein ligase RNF4 from Rattus norvegicus (Rat).